The chain runs to 164 residues: MLDLLPDLFDHYPSKLTLLPLAFRAFGGKRLFWGEVVTVKCFEDNSKVKEVLAQPGHGKVLIVDGGGSSRRALLGDLIAQSAMDNGWQGVIINGYVRDAARLSSFNLGVYALGAMPMKTEKLDQGQINVPIELGCVTVKPGMMVYVDENGIAISEESLNFAFLN.

Substrate is bound by residues 75–78 and Arg-97; that span reads GDLI. An a divalent metal cation-binding site is contributed by Asp-98.

This sequence belongs to the class II aldolase/RraA-like family. Homotrimer. Requires a divalent metal cation as cofactor.

The enzyme catalyses 4-hydroxy-4-methyl-2-oxoglutarate = 2 pyruvate. It carries out the reaction oxaloacetate + H(+) = pyruvate + CO2. Its function is as follows. Catalyzes the aldol cleavage of 4-hydroxy-4-methyl-2-oxoglutarate (HMG) into 2 molecules of pyruvate. Also contains a secondary oxaloacetate (OAA) decarboxylase activity due to the common pyruvate enolate transition state formed following C-C bond cleavage in the retro-aldol and decarboxylation reactions. This Shewanella oneidensis (strain ATCC 700550 / JCM 31522 / CIP 106686 / LMG 19005 / NCIMB 14063 / MR-1) protein is Putative 4-hydroxy-4-methyl-2-oxoglutarate aldolase.